A 209-amino-acid chain; its full sequence is COP9 signalosome complex subunit 8 (209 aa).

Positions Asp-8–Phe-179 constitute a PCI domain. Ser-175 carries the post-translational modification Phosphoserine.

It belongs to the CSN8 family. In terms of assembly, component of the CSN complex, composed of COPS1/GPS1, COPS2, COPS3, COPS4, COPS5, COPS6, COPS7 (COPS7A or COPS7B), COPS8 and COPS9. In the complex, it probably interacts directly with COPS3, COPS4 and COPS7 (COPS7A or COPS7B).

The protein localises to the cytoplasm. The protein resides in the nucleus. Its function is as follows. Component of the COP9 signalosome complex (CSN), a complex involved in various cellular and developmental processes. The CSN complex is an essential regulator of the ubiquitin (Ubl) conjugation pathway by mediating the deneddylation of the cullin subunits of SCF-type E3 ligase complexes, leading to decrease the Ubl ligase activity of SCF-type complexes such as SCF, CSA or DDB2. The complex is also involved in phosphorylation of p53/TP53, c-jun/JUN, IkappaBalpha/NFKBIA, ITPK1 and IRF8/ICSBP, possibly via its association with CK2 and PKD kinases. CSN-dependent phosphorylation of TP53 and JUN promotes and protects degradation by the Ubl system, respectively. This chain is COP9 signalosome complex subunit 8 (Cops8), found in Rattus norvegicus (Rat).